Consider the following 551-residue polypeptide: Membrane protein insertase YidC (551 aa).

The helical transmembrane segment at Tyr-6–Asp-26 threads the bilayer. Low complexity predominate over residues Ser-34–Ser-50. The interval Ser-34–Pro-68 is disordered. Residues Ala-56–Pro-68 show a composition bias toward polar residues. The next 5 membrane-spanning stretches (helical) occupy residues Thr-340–Ile-360, Phe-363–Phe-383, Leu-433–Leu-453, Phe-464–Met-484, and Ile-509–Trp-529.

This sequence belongs to the OXA1/ALB3/YidC family. Type 1 subfamily. Interacts with the Sec translocase complex via SecD. Specifically interacts with transmembrane segments of nascent integral membrane proteins during membrane integration.

Its subcellular location is the cell inner membrane. Functionally, required for the insertion and/or proper folding and/or complex formation of integral membrane proteins into the membrane. Involved in integration of membrane proteins that insert both dependently and independently of the Sec translocase complex, as well as at least some lipoproteins. Aids folding of multispanning membrane proteins. The polypeptide is Membrane protein insertase YidC (Marinomonas sp. (strain MWYL1)).